We begin with the raw amino-acid sequence, 344 residues long: MRLGLKIASLAIVFLILGCLGGGETETGQKTAKLIIFHAGSLSVPFSQLESEFAKYAEKELGIKVTFQDEASGSVKAVRKVTDLGKKADIVAVADYTLIPQLMVPNYTDFYVLFATNEIVIAFTEKSKYADEMLKNPDKWYEILAREDVSFGFSDPNQDPCGYRSVMVMKLADLYYGKPIFETLVEKTTNIYANGTHIYAPKEIIVKDKRVVIRPKETDLVGLVESGSLDYFFIYKSVAEQHNLKYITLPNEINLKDFSKADFYKKVSITLGSTGKTIYAKPIVYGITVLKDAPNRELALEFLKFLLSEKGKEIFRENHQDFLTPPVAFGNVPEEIKGLVEIKE.

A signal peptide spans 1–25 (MRLGLKIASLAIVFLILGCLGGGET). Molybdate-binding positions include 40–41 (GS), serine 74, 159–161 (DPC), glutamate 217, and tyrosine 235. Residues 40–41 (GS), serine 74, 159–161 (DPC), glutamate 217, and tyrosine 235 contribute to the tungstate site.

The protein belongs to the bacterial solute-binding protein 1 family. WtpA subfamily. In terms of assembly, the complex is composed of two ATP-binding proteins (WtpC), two transmembrane proteins (WtpB) and a solute-binding protein (WtpA).

Its subcellular location is the cell membrane. Part of the ABC transporter complex WtpABC involved in molybdate/tungstate import. Binds tungstate and molybdate. The protein is Molybdate/tungstate-binding protein WtpA (wtpA) of Pyrococcus abyssi (strain GE5 / Orsay).